The chain runs to 109 residues: UPF0235 protein MA_4097 (109 aa).

Belongs to the UPF0235 family.

This is UPF0235 protein MA_4097 from Methanosarcina acetivorans (strain ATCC 35395 / DSM 2834 / JCM 12185 / C2A).